Consider the following 717-residue polypeptide: F-box only protein 42 (717 aa).

The segment covering 1 to 30 (MASSSDSEDDSFMAVDQEETVLEGTMEQDE) has biased composition (acidic residues). Residues 1 to 47 (MASSSDSEDDSFMAVDQEETVLEGTMEQDEEPHPVLEAEETRHNRSM) form a disordered region. Basic and acidic residues predominate over residues 31 to 43 (EPHPVLEAEETRH). One can recognise an F-box domain in the interval 44 to 93 (NRSMSELPEEVLEYILSFLSPYQEHKTAALVCKQWYRLIKGVAHQCYHGF). Kelch repeat units follow at residues 132 to 184 (SMYV…VYKD), 186 to 242 (LVLF…VIDD), 244 to 293 (MIVF…VIDD), and 295 to 342 (TILI…LWCH). Disordered stretches follow at residues 361–472 (RAPL…SAAE) and 508–539 (PASS…GVHT). The segment covering 363-376 (PLSPSLNSRPSPIS) has biased composition (low complexity). Residues serine 365 and serine 373 each carry the phosphoserine modification. A Phosphothreonine modification is found at threonine 378. Polar residues-rich tracts occupy residues 416–426 (QRQTPSGSREG) and 455–469 (SLDS…STPS). Residue serine 552 is modified to Phosphoserine. Low complexity predominate over residues 570–596 (GPSASAALSPPLGSSPGSPGSQSLSSG). Residues 570 to 635 (GPSASAALSP…PQSLNVGKPL (66 aa)) form a disordered region.

Component of some SCF complex, composed of CUL1, SKP1, RBX1 and FBXO42. Interacts (via the kelch domain) with p53/TP53; interaction is direct.

Its function is as follows. Substrate-recognition component of some SCF (SKP1-CUL1-F-box protein)-type E3 ubiquitin ligase complex. Specifically recognizes p53/TP53, promoting its ubiquitination and degradation. This is F-box only protein 42 (FBXO42) from Pongo abelii (Sumatran orangutan).